A 134-amino-acid polypeptide reads, in one-letter code: ATP synthase epsilon chain, chloroplastic (134 aa).

This sequence belongs to the ATPase epsilon chain family. F-type ATPases have 2 components, CF(1) - the catalytic core - and CF(0) - the membrane proton channel. CF(1) has five subunits: alpha(3), beta(3), gamma(1), delta(1), epsilon(1). CF(0) has three main subunits: a, b and c.

The protein localises to the plastid. The protein resides in the chloroplast thylakoid membrane. Its function is as follows. Produces ATP from ADP in the presence of a proton gradient across the membrane. In Porphyra purpurea (Red seaweed), this protein is ATP synthase epsilon chain, chloroplastic.